The sequence spans 942 residues: Lon protease homolog 4, chloroplastic/mitochondrial (942 aa).

Ser54 bears the Phosphoserine mark. The 223-residue stretch at 79–301 (VIALPLPHKP…LTLELVKKEV (223 aa)) folds into the Lon N-terminal domain. 456–463 (GPTGVGKT) lines the ATP pocket. Positions 673-725 (ISDDVTTDTEETKSLAKTDLESPETSAEGSTVLTDELATGDPTESTTEQSGEV) are disordered. Basic and acidic residues predominate over residues 682–692 (EETKSLAKTDL). The span at 695-705 (PETSAEGSTVL) shows a compositional bias: polar residues. One can recognise a Lon proteolytic domain in the interval 756–940 (QTPVGVVMGL…EQIFELAFGY (185 aa)). Catalysis depends on residues Ser846 and Lys889.

Belongs to the peptidase S16 family. Homohexamer or homoheptamer. Organized in a ring with a central cavity.

It is found in the mitochondrion matrix. The protein localises to the plastid. The protein resides in the chloroplast thylakoid membrane. The enzyme catalyses Hydrolysis of proteins in presence of ATP.. ATP-dependent serine protease that mediates the selective degradation of misfolded, unassembled or oxidatively damaged polypeptides as well as certain short-lived regulatory proteins in the mitochondrial matrix. May also have a chaperone function in the assembly of inner membrane protein complexes. Participates in the regulation of mitochondrial gene expression and in the maintenance of the integrity of the mitochondrial genome. Binds to mitochondrial DNA in a site-specific manner. The sequence is that of Lon protease homolog 4, chloroplastic/mitochondrial (LON4) from Arabidopsis thaliana (Mouse-ear cress).